The following is a 319-amino-acid chain: Dehydrogenase/reductase SDR family member 9 (319 aa).

Positions 1 to 17 are cleaved as a signal peptide; it reads MLFWVLGLLILCGFLWT. Residues 34 to 58 and D83 each bind NAD(+); that span reads ITGCDSGFGNLAARTFDKKGFHVIA. S164 is a binding site for substrate. The Proton acceptor role is filled by Y176. K180 serves as a coordination point for NAD(+).

This sequence belongs to the short-chain dehydrogenases/reductases (SDR) family. In terms of assembly, homotetramer. As to expression, highly expressed in trachea and epidermis. Detected at lower levels in spinal cord, bone marrow, brain, tongue, esophagus, heart, colon, testis, placenta, lung, skeletal muscle and lymph node.

It localises to the microsome membrane. The protein resides in the endoplasmic reticulum membrane. It carries out the reaction 3beta-hydroxy-5alpha-pregnane-20-one + NAD(+) = 5alpha-pregnane-3,20-dione + NADH + H(+). The enzyme catalyses 17beta-hydroxy-5alpha-androstan-3-one + NAD(+) = 5alpha-androstan-3,17-dione + NADH + H(+). It catalyses the reaction androsterone + NAD(+) = 5alpha-androstan-3,17-dione + NADH + H(+). The catalysed reaction is 5alpha-androstane-3alpha,17beta-diol + NAD(+) = 17beta-hydroxy-5alpha-androstan-3-one + NADH + H(+). It carries out the reaction all-trans-retinol + NAD(+) = all-trans-retinal + NADH + H(+). The enzyme catalyses 3alpha-hydroxy-5alpha-pregnan-20-one + NAD(+) = 5alpha-pregnane-3,20-dione + NADH + H(+). Functionally, 3-alpha-hydroxysteroid dehydrogenase that converts 3-alpha-tetrahydroprogesterone (allopregnanolone) to dihydroxyprogesterone and 3-alpha-androstanediol to dihydroxyprogesterone. Also plays a role in the biosynthesis of retinoic acid from retinaldehyde. Can utilize both NADH and NADPH. The sequence is that of Dehydrogenase/reductase SDR family member 9 (DHRS9) from Homo sapiens (Human).